The following is an 88-amino-acid chain: Arminin 1c (88 aa).

Residues 1–18 (MKPVFVILFLTCIAFTYA) form the signal peptide. The propeptide occupies 19–57 (ESYEDVKEEIKNEVEREIFEDLEEESDVLDSNVREFNDA). At valine 85 the chain carries Valine amide.

Belongs to the arminin family. As to expression, expressed in entodermal epithelium along the body column.

Its subcellular location is the secreted. The protein localises to the target cell membrane. In terms of biological role, antimicrobial peptide with a broad-spectrum antimicrobial activity. Keeps its antibacterial activity under a wide range of salt concentrations that mimic physiological conditions of human blood, which is surprising, since Hydra is an obligate freshwater animal with nearly no salt tolerance. Does not affect red blood cells. The chain is Arminin 1c from Hydra vulgaris (Hydra).